Consider the following 459-residue polypeptide: Transcription factor AP-2-beta (459 aa).

A Glycyl lysine isopeptide (Lys-Gly) (interchain with G-Cter in SUMO) cross-link involves residue lysine 21. The disordered stretch occupies residues 30–139; that stretch reads HDGVPSHSSR…PQLSGLDPRR (110 aa). Residues 35 to 51 show a composition bias toward polar residues; it reads SHSSRLSQLGSVSQGPY. Low complexity predominate over residues 121 to 132; that stretch reads LLPQPRAALPQL. At serine 258 the chain carries Phosphoserine; by PKA. Residues 299–429 are H-S-H (helix-span-helix), dimerization; the sequence is RRKAANVTLL…YLTEALKGMD (131 aa). The disordered stretch occupies residues 435-459; it reads NTTNRHTSGEGPGSKTGDKEEKHRK. Over residues 450–459 the composition is skewed to basic and acidic residues; it reads TGDKEEKHRK.

This sequence belongs to the AP-2 family. In terms of assembly, binds DNA as a dimer. Can form homodimers or heterodimers with other AP-2 family members. Interacts with CITED4. Interacts with UBE2I. Interacts with KCTD1; this interaction represses transcription activation. Interacts with CITED2 (via C-terminus); the interaction stimulates TFAP2B-transcriptional activity. In terms of processing, sumoylated. Sumoylated on Lys-21; which inhibits transcriptional activity. In terms of tissue distribution, localizes to neurons in areas of the cerebral cortex, cerebellum and hypothalamus (at protein level).

Its subcellular location is the nucleus. Sequence-specific DNA-binding protein that interacts with inducible viral and cellular enhancer elements to regulate transcription of selected genes. AP-2 factors bind to the consensus sequence 5'-GCCNNNGGC-3' and activate genes involved in a large spectrum of important biological functions including proper eye, face, body wall, limb and neural tube development. They also suppress a number of genes including MCAM/MUC18, C/EBP alpha and MYC. AP-2-beta appears to be required for normal face and limb development and for proper terminal differentiation and function of renal tubular epithelia. The sequence is that of Transcription factor AP-2-beta (Tfap2b) from Mus musculus (Mouse).